Here is a 493-residue protein sequence, read N- to C-terminus: Extracellular tyrosine-protein kinase PKDCC (493 aa).

The signal sequence occupies residues 1–32 (MRRRRAAVAAGFCASFLLGSVLNVLFAPGSEP). The interval 28–128 (PGSEPPRPGQ…PGPGSPGPGP (101 aa)) is disordered. A compositionally biased stretch (pro residues) spans 30 to 46 (SEPPRPGQSPEPSPAPG). Basic and acidic residues predominate over residues 52 to 69 (GRGELARQIRARYEEVQR). Pro residues-rich tracts occupy residues 95–105 (PGLPRPRPPWA) and 114–127 (GWPP…PGPG). Asn-137 carries N-linked (GlcNAc...) asparagine glycosylation. A Protein kinase domain is found at 138-493 (VSGAQYMGSG…NKTTYVKASG (356 aa)). ATP-binding positions include 144–152 (MGSGYTKAV) and Lys-166. A Phosphotyrosine modification is found at Tyr-148. A Phosphoserine modification is found at Ser-177. Asp-278 (proton acceptor) is an active-site residue. 5 N-linked (GlcNAc...) asparagine glycosylation sites follow: Asn-320, Asn-369, Asn-400, Asn-460, and Asn-484.

Belongs to the protein kinase superfamily. Post-translationally, N-glycosylated. In terms of processing, phosphorylated on tyrosines; probably via autophosphorylation. Highly expressed in platelets.

It is found in the secreted. Its subcellular location is the golgi apparatus. The catalysed reaction is L-tyrosyl-[protein] + ATP = O-phospho-L-tyrosyl-[protein] + ADP + H(+). Functionally, secreted tyrosine-protein kinase that mediates phosphorylation of extracellular proteins and endogenous proteins in the secretory pathway, which is essential for patterning at organogenesis stages. Mediates phosphorylation of MMP1, MMP13, MMP14, MMP19 and ERP29. Probably plays a role in platelets: rapidly and quantitatively secreted from platelets in response to stimulation of platelet degranulation. May also have serine/threonine protein kinase activity. Required for longitudinal bone growth through regulation of chondrocyte differentiation. May be indirectly involved in protein transport from the Golgi apparatus to the plasma membrane. The sequence is that of Extracellular tyrosine-protein kinase PKDCC from Homo sapiens (Human).